A 1479-amino-acid polypeptide reads, in one-letter code: DNA-directed RNA polymerase subunit beta'' (1479 aa).

4 residues coordinate Zn(2+): C220, C296, C303, and C306. 2 disordered regions span residues 618–640 (TRAEDSEEEYETLEDEYRTREDE) and 663–756 (LEDE…KKEG). 3 stretches are compositionally biased toward acidic residues: residues 622-631 (DSEEEYETLE), 704-717 (DEYGTIEEDSEDEY), and 731-749 (LEEDSEEDSEDEYESPEED).

This sequence belongs to the RNA polymerase beta' chain family. RpoC2 subfamily. In plastids the minimal PEP RNA polymerase catalytic core is composed of four subunits: alpha, beta, beta', and beta''. When a (nuclear-encoded) sigma factor is associated with the core the holoenzyme is formed, which can initiate transcription. The cofactor is Zn(2+).

It is found in the plastid. Its subcellular location is the chloroplast. The enzyme catalyses RNA(n) + a ribonucleoside 5'-triphosphate = RNA(n+1) + diphosphate. In terms of biological role, DNA-dependent RNA polymerase catalyzes the transcription of DNA into RNA using the four ribonucleoside triphosphates as substrates. In Triticum aestivum (Wheat), this protein is DNA-directed RNA polymerase subunit beta''.